The sequence spans 344 residues: Phosphate acyltransferase (344 aa).

Belongs to the PlsX family. Homodimer. Probably interacts with PlsY.

The protein resides in the cytoplasm. It carries out the reaction a fatty acyl-[ACP] + phosphate = an acyl phosphate + holo-[ACP]. It functions in the pathway lipid metabolism; phospholipid metabolism. In terms of biological role, catalyzes the reversible formation of acyl-phosphate (acyl-PO(4)) from acyl-[acyl-carrier-protein] (acyl-ACP). This enzyme utilizes acyl-ACP as fatty acyl donor, but not acyl-CoA. This Yersinia enterocolitica serotype O:8 / biotype 1B (strain NCTC 13174 / 8081) protein is Phosphate acyltransferase.